The primary structure comprises 370 residues: Capsular polysaccharide phosphotransferase (370 aa).

This sequence belongs to the stealth family.

Its function is as follows. Part of a capsular polysaccharide synthesis locus. In Actinobacillus suis, this protein is Capsular polysaccharide phosphotransferase.